Here is a 112-residue protein sequence, read N- to C-terminus: Putative pterin-4-alpha-carbinolamine dehydratase (112 aa).

The protein belongs to the pterin-4-alpha-carbinolamine dehydratase family.

The catalysed reaction is (4aS,6R)-4a-hydroxy-L-erythro-5,6,7,8-tetrahydrobiopterin = (6R)-L-erythro-6,7-dihydrobiopterin + H2O. The chain is Putative pterin-4-alpha-carbinolamine dehydratase from Shewanella woodyi (strain ATCC 51908 / MS32).